The following is a 162-amino-acid chain: UPF0460 protein y4vQ (162 aa).

Belongs to the UPF0460 family.

In Sinorhizobium fredii (strain NBRC 101917 / NGR234), this protein is UPF0460 protein y4vQ.